A 316-amino-acid chain; its full sequence is PHD finger protein 20-like protein 1 (316 aa).

The 61-residue stretch at Ile-11–Pro-71 folds into the Tudor 1 domain. Glycyl lysine isopeptide (Lys-Gly) (interchain with G-Cter in SUMO2) cross-links involve residues Lys-75 and Lys-79. The Tudor 2 domain maps to Phe-85–Lys-141. Residues Ala-183 to Ser-237 are disordered. A compositionally biased stretch (polar residues) spans Lys-186–Ser-197. The segment covering Asn-198–Thr-218 has biased composition (basic and acidic residues).

Interacts with methylated DNMT1 (DNMT1K142me1). Interacts with SOX2.

The protein localises to the nucleus. Functionally, is a negative regulator of proteasomal degradation of a set of methylated proteins, including DNMT1 and SOX2. Involved in the maintainance of embryonic stem cells pluripotency, through the regulation of SOX2 levels. This Bos taurus (Bovine) protein is PHD finger protein 20-like protein 1 (PHF20L1).